A 1061-amino-acid polypeptide reads, in one-letter code: Zinc finger protein ZFPM1 (1061 aa).

The CCHC FOG-type 1 zinc-finger motif lies at 152–185 (VVNKDVFPCKDCGIWYRSERNLQAHLMYYCASRQ). 4 residues coordinate Zn(2+): C160, C163, H176, and C181. C2H2-type zinc fingers lie at residues 204–228 (RICP…MRSH), 234–256 (FVCL…LKVH), and 262–285 (GVCH…VTNH). Disordered regions lie at residues 349–393 (PSAT…SEET) and 435–455 (TEMS…GAAT). The segment covering 378–388 (SPISSSSSASS) has biased composition (low complexity). A compositionally biased stretch (polar residues) spans 436–448 (EMSSPTPGSSPVP). The CCHC FOG-type 2 zinc finger occupies 508 to 541 (SAVPKGATCFECEITFNNINNYYVHKRLYCSGRH). Residues C516, C519, H532, and C537 each coordinate Zn(2+). Disordered stretches follow at residues 561-586 (ALAS…ESSA) and 599-630 (MDCE…NRTV). Residues 565 to 574 (GFSSTEQEAS) show a composition bias toward polar residues. The CCHC FOG-type 3 zinc-finger motif lies at 623–656 (EEDPNRTVCGACNIRFSRHETYVVHKRYYCASRH). Zn(2+)-binding residues include C631, C634, H647, and C652. The tract at residues 661–681 (RRREVNKPGPPYTTQPTPRTR) is disordered. The interaction with CTBP stretch occupies residues 736 to 742 (PIDLSKK). The segment at 759–792 (APLADYHECTACRISFNSLESYLAHKKFSCPTAP) adopts a CCHC FOG-type 4 zinc-finger fold. Residues C767, C770, H783, and C788 each coordinate Zn(2+). A C2H2-type 4 zinc finger spans residues 869–892 (TTCPYCPHNVIIRGDLLEHFRSVH). The interval 917–1021 (RGQTSSASEN…MQPPKPSLIS (105 aa)) is disordered. Low complexity-rich tracts occupy residues 933 to 942 (VSSASPLQLP) and 954 to 972 (TTSS…STPR). Residues 973–984 (PLLPTSPAPPSN) show a composition bias toward pro residues. The CCHC FOG-type 5 zinc finger occupies 1023 to 1056 (VPNGNHRYCRLCNIKFSSLSTFIAHKKYYCSSHA). 4 residues coordinate Zn(2+): C1031, C1034, H1047, and C1052.

This sequence belongs to the FOG (Friend of GATA) family. Interacts with corepressor CTBP. Interacts with the N-terminal zinc-finger of GATA1 and probably GATA2. Predominantly expressed in heart and brain. Also expressed in ventral blood island and adult spleen.

It localises to the nucleus. Transcription regulator that plays an central role in red blood cell differentiation. Essential cofactor that acts via the formation of a heterodimer with transcription factors of the GATA family GATA1 and GATA2. Such heterodimer can both activate or repress transcriptional activity, depending on the cell and promoter context. Acts as a repressor of red blood cells, probably by modulating activity of GATA1. This chain is Zinc finger protein ZFPM1 (zfpm1), found in Xenopus laevis (African clawed frog).